We begin with the raw amino-acid sequence, 318 residues long: Acetyl-coenzyme A carboxylase carboxyl transferase subunit alpha (318 aa).

The region spanning 39 to 292 (LTDKSEKQLR…GDSIAAELPD (254 aa)) is the CoA carboxyltransferase C-terminal domain.

It belongs to the AccA family. As to quaternary structure, acetyl-CoA carboxylase is a heterohexamer composed of biotin carboxyl carrier protein (AccB), biotin carboxylase (AccC) and two subunits each of ACCase subunit alpha (AccA) and ACCase subunit beta (AccD).

It is found in the cytoplasm. It carries out the reaction N(6)-carboxybiotinyl-L-lysyl-[protein] + acetyl-CoA = N(6)-biotinyl-L-lysyl-[protein] + malonyl-CoA. Its pathway is lipid metabolism; malonyl-CoA biosynthesis; malonyl-CoA from acetyl-CoA: step 1/1. Its function is as follows. Component of the acetyl coenzyme A carboxylase (ACC) complex. First, biotin carboxylase catalyzes the carboxylation of biotin on its carrier protein (BCCP) and then the CO(2) group is transferred by the carboxyltransferase to acetyl-CoA to form malonyl-CoA. This is Acetyl-coenzyme A carboxylase carboxyl transferase subunit alpha from Gluconacetobacter diazotrophicus (strain ATCC 49037 / DSM 5601 / CCUG 37298 / CIP 103539 / LMG 7603 / PAl5).